Reading from the N-terminus, the 155-residue chain is MKAWRRLRSPRFFRFALCQQRRRRFIAIPLPDRKRKADSDNFRHLVNNVQIRIRKHAHISRVLHHDSHDADVSDRWQRFAERRARGKGARADGDRMDKRLRPDNAVDCHYICSVFVLQLFGNASDVCRIDGLPERADDGQMIRISVFQQRADERP.

This Geobacillus stearothermophilus (Bacillus stearothermophilus) protein is Protein PtsT (ptsT).